A 1937-amino-acid polypeptide reads, in one-letter code: Collagen-like protein 7 (1937 aa).

2 N-linked (GlcNAc...) asparagine; by host glycosylation sites follow: Asn-6 and Asn-21. 4 disordered regions span residues 88–248 (CKGN…KGDK), 294–531 (NLKG…PDLG), 583–643 (LKGD…NQGV), and 670–1144 (IKGD…DTAT). Collagen-like domains lie at 102–161 (GPKG…KGEK), 168–227 (GEKG…KGDI), 297–356 (GEKG…KGEK), 363–422 (GDKG…IGEK), and 453–512 (GDKG…KGDK). Basic and acidic residues predominate over residues 296-514 (KGEKGDKGNK…DKGDKGDKGD (219 aa)). Residue Asn-515 is glycosylated (N-linked (GlcNAc...) asparagine; by host). 3 stretches are compositionally biased toward basic and acidic residues: residues 584–605 (KGDKGDKGINGNKGDKGEKGDK), 614–625 (KGEKGDKGDKGD), and 670–899 (IKGD…KGDK). 5 consecutive Collagen-like domains span residues 672–731 (GDKG…KGDK), 735–854 (GNKG…KGNI), 867–926 (GLKG…KGDK), 936–995 (GIKG…KGDK), and 1023–1142 (GSKG…KGDT). A glycan (N-linked (GlcNAc...) asparagine; by host) is linked at Asn-902. The span at 907-1141 (YKGDKGDKGS…DKGDKGDKGD (235 aa)) shows a compositional bias: basic and acidic residues. N-linked (GlcNAc...) asparagine; by host glycans are attached at residues Asn-1178, Asn-1192, Asn-1212, Asn-1217, Asn-1245, Asn-1246, Asn-1255, Asn-1317, Asn-1422, Asn-1427, Asn-1432, Asn-1443, Asn-1452, Asn-1477, Asn-1494, Asn-1506, Asn-1513, Asn-1533, Asn-1598, Asn-1619, Asn-1620, Asn-1632, Asn-1641, Asn-1663, Asn-1664, Asn-1672, Asn-1682, Asn-1683, Asn-1732, Asn-1735, Asn-1746, Asn-1756, Asn-1784, Asn-1842, and Asn-1934.

In terms of processing, may be hydroxylated on lysine by the viral-encoded procollagen-lysine,2-oxoglutarate 5-dioxygenase.

The protein localises to the virion. In terms of biological role, may participate in the formation of a layer of cross-linked glycosylated fibrils at the viral surface thus giving it a hairy-like appearance. This is Collagen-like protein 7 from Acanthamoeba polyphaga mimivirus (APMV).